A 348-amino-acid chain; its full sequence is Growth-regulating factor 5 (348 aa).

Positions 24–59 constitute a QLQ domain; that stretch reads VFTAAQWAELEQQALIYKYLVAGVPVPGDLLLPIRP. 2 short sequence motifs (bipartite nuclear localization signal) span residues 94–112 and 130–137; these read KKLD…KKWR and RGRNRSRK. The region spanning 97–141 is the WRC domain; that stretch reads DPEPWRCRRTDGKKWRCSKEAHPDSKYCERHMHRGRNRSRKPVES. Disordered regions lie at residues 125–165 and 306–348; these read ERHM…HDTD and LRPF…PRCD. Residues 127-136 show a composition bias toward basic residues; it reads HMHRGRNRSR. Residues 148–161 show a composition bias toward polar residues; sequence PQSQPQLSNVTTAT. A compositionally biased stretch (basic and acidic residues) spans 306-320; sequence LRPFFDEWPGRRDSW. The span at 329–340 shows a compositional bias: polar residues; sequence NQTSFSTTQLSI.

This sequence belongs to the GRF family.

The protein resides in the nucleus. In terms of biological role, transcription activator that plays a regulatory role in gibberellin-induced stem elongation. The polypeptide is Growth-regulating factor 5 (GRF5) (Oryza sativa subsp. japonica (Rice)).